The sequence spans 1128 residues: Testis-expressed protein 2 (1128 aa).

Disordered stretches follow at residues 1-28 (MTSLNGRHAEKTIDMPKPSAPKVHVQRS), 71-99 (AKEDLYLESQGGHDPAGPVSTAPADGLSV), and 130-279 (PLAL…FFKV). Residues 130–186 (PLALSPGSSSSGPLASSPSVSSLSEQKTSSSSPLSSPSKSPVLSSSASSSALSSAKP) are compositionally biased toward low complexity. A Phosphoserine modification is found at Ser195. A compositionally biased stretch (polar residues) spans 248 to 274 (QFTQPRNTGGDSKTAPSSPLTSPSDTR). Phosphothreonine is present on Thr261. 4 positions are modified to phosphoserine: Ser264, Ser265, Ser269, and Ser294. The interval 345–387 (KEEEGDSEGEGYGSDSNTSRSDHLKPTEDASKEVEPKGSQASS) is disordered. Residues 364 to 380 (RSDHLKPTEDASKEVEP) show a composition bias toward basic and acidic residues. A run of 2 helical transmembrane segments spans residues 473–493 (TLGFFIMCVYAYLILPLPYYM) and 495–515 (GLFLGVGLGFMTAVCMIWFFT). A glycan (N-linked (GlcNAc...) asparagine) is linked at Asn593. A compositionally biased stretch (basic and acidic residues) spans 645–671 (SKAQSDKEATEEKPPPEKELPSEDLKK). Disordered regions lie at residues 645–688 (SKAQ…DPIL), 716–765 (RKPA…QKEL), 787–821 (QDNRSPHRSPVQSAESSPTASKKLPEAPPSEEEEQ), and 945–981 (ADSDEESSSAGSSEEDDPPEPTAGDKQPLPGAEGYVG). Residues Ser733, Ser739, Ser745, Ser749, Ser752, Ser799, and Ser816 each carry the phosphoserine modification. Residues 736 to 751 (SSPSGHLSHSRSSSKG) are compositionally biased toward low complexity. Residues 796 to 806 (PVQSAESSPTA) are compositionally biased toward polar residues. Residues 817 to 1102 (EEEEQEAWVN…MPNMDDVYIP (286 aa)) enclose the SMP-LTD domain. Positions 946-963 (DSDEESSSAGSSEEDDPP) are enriched in acidic residues.

It localises to the endoplasmic reticulum membrane. Its subcellular location is the nucleus membrane. During endoplasmic reticulum (ER) stress or when cellular ceramide levels increase, may induce contacts between the ER and medial-Golgi complex to facilitate non-vesicular transport of ceramides from the ER to the Golgi complex where they are converted to complex sphingolipids, preventing toxic ceramide accumulation. This Mus musculus (Mouse) protein is Testis-expressed protein 2 (Tex2).